Consider the following 431-residue polypeptide: Na(+)-translocating NADH-quinone reductase subunit F (431 aa).

Residues 10–30 (IFVASAAFCSLGLILVAVILL) traverse the membrane as a helical segment. The region spanning 41–133 (CKLKINNDDS…DLCLEVEERY (93 aa)) is the 2Fe-2S ferredoxin-type domain. [2Fe-2S] cluster is bound by residues C76, C82, C85, and C117. One can recognise an FAD-binding FR-type domain in the interval 136–286 (ASSWEGTVVS…SGPYGESFMK (151 aa)).

Belongs to the NqrF family. Composed of six subunits; NqrA, NqrB, NqrC, NqrD, NqrE and NqrF. It depends on [2Fe-2S] cluster as a cofactor. The cofactor is FAD.

The protein localises to the cell inner membrane. The catalysed reaction is a ubiquinone + n Na(+)(in) + NADH + H(+) = a ubiquinol + n Na(+)(out) + NAD(+). Its function is as follows. NQR complex catalyzes the reduction of ubiquinone-1 to ubiquinol by two successive reactions, coupled with the transport of Na(+) ions from the cytoplasm to the periplasm. The first step is catalyzed by NqrF, which accepts electrons from NADH and reduces ubiquinone-1 to ubisemiquinone by a one-electron transfer pathway. The polypeptide is Na(+)-translocating NADH-quinone reductase subunit F (Chlamydia trachomatis serovar A (strain ATCC VR-571B / DSM 19440 / HAR-13)).